The primary structure comprises 157 residues: Crossover junction endodeoxyribonuclease RuvC (157 aa).

Active-site residues include aspartate 7, glutamate 67, and aspartate 140. Residues aspartate 7, glutamate 67, and aspartate 140 each contribute to the Mg(2+) site.

It belongs to the RuvC family. In terms of assembly, homodimer which binds Holliday junction (HJ) DNA. The HJ becomes 2-fold symmetrical on binding to RuvC with unstacked arms; it has a different conformation from HJ DNA in complex with RuvA. In the full resolvosome a probable DNA-RuvA(4)-RuvB(12)-RuvC(2) complex forms which resolves the HJ. It depends on Mg(2+) as a cofactor.

It is found in the cytoplasm. The enzyme catalyses Endonucleolytic cleavage at a junction such as a reciprocal single-stranded crossover between two homologous DNA duplexes (Holliday junction).. The RuvA-RuvB-RuvC complex processes Holliday junction (HJ) DNA during genetic recombination and DNA repair. Endonuclease that resolves HJ intermediates. Cleaves cruciform DNA by making single-stranded nicks across the HJ at symmetrical positions within the homologous arms, yielding a 5'-phosphate and a 3'-hydroxyl group; requires a central core of homology in the junction. The consensus cleavage sequence is 5'-(A/T)TT(C/G)-3'. Cleavage occurs on the 3'-side of the TT dinucleotide at the point of strand exchange. HJ branch migration catalyzed by RuvA-RuvB allows RuvC to scan DNA until it finds its consensus sequence, where it cleaves and resolves the cruciform DNA. This chain is Crossover junction endodeoxyribonuclease RuvC, found in Rickettsia conorii (strain ATCC VR-613 / Malish 7).